The primary structure comprises 579 residues: MAAKSDGAAASAGPDPEGAAGGARGSAGGRGEAAAAAGPPGVVGAGGPGPRYELRDCCWVLCALLVFFSDGATDLWLAASYYLQNQHTYFSLTLLFVLLPSLVVQLLSFRWFVYDYSEPAGSPGPAVSTKDSVAGGAAISTKDSAGAFRTKEGSPEPGPQPAPSSASAYRRRCCRLCIWLLQTLVHLLQLGQVWRYLRALYLGLQSRWRGERLRRHFYWQMLFESADVSMLRLLETFLRSAPQLVLQLSLLVHRGGAPDLLPALSTSASLVSLAWTLASYQKVLRDSRDDKRPLSYKGAVAQVLWHLFSIAARGLAFALFASVYKLYFGICIVGHWSVMTFWVIQGETDFCMSKGEEIIYNMVVGIIYIFCWFNVKEGRSRRRMTLYHCIVLLENAALTGFWYSSRNFSTDFYSLIMVCVVASSFALGIFFMCVYYCLLHPNGPMLGPQAPGCIFRKASEPCGPPADAITSPPRSLPRTTGAERDGASAGERAGTPTPPVFQVRPGLPPTPVARTLRTEGPVIRIDLPRKKYPAWDAHFIDRRLRKTILALEYSSPATPRLQYRSVGTSQELLEYETTV.

The segment covering 1–18 (MAAKSDGAAASAGPDPEG) has biased composition (low complexity). Residues 1 to 40 (MAAKSDGAAASAGPDPEGAAGGARGSAGGRGEAAAAAGPP) are disordered. Residues 19–31 (AAGGARGSAGGRG) are compositionally biased toward gly residues. Transmembrane regions (helical) follow at residues 59 to 79 (WVLC…WLAA) and 89 to 109 (YFSL…LLSF). Residues 146–165 (GAFRTKEGSPEPGPQPAPSS) form a disordered region. The next 5 helical transmembrane spans lie at 260-280 (LLPA…LASY), 314-334 (GLAF…CIVG), 355-375 (GEEI…WFNV), 384-404 (MTLY…FWYS), and 415-435 (LIMV…MCVY). Positions 466–510 (ADAITSPPRSLPRTTGAERDGASAGERAGTPTPPVFQVRPGLPPT) are disordered.

Belongs to the XK family.

The protein resides in the cell membrane. This chain is XK-related protein 7 (XKR7), found in Pan troglodytes (Chimpanzee).